Consider the following 3132-residue polypeptide: Toxin CdiA (3132 aa).

The segment at residues 1–32 (MHQPPVRFTYRLLSYLVSAIIAGQPLLPAVGA) is a signal peptide (signal). Positions 36–322 (PQNGAGMDKA…AGGNLSVTGT (287 aa)) are two-partner system transport domain (TPS). The FHA-1 stretch occupies residues 351-1378 (GELTAGQNAM…ITMNTAHLLN (1028 aa)). Residues 1379-1635 (SWDAISASHE…LSLSGASVSS (257 aa)) are receptor-binding domain (RBD). Positions 1636 to 1820 (YPLPSGNNGY…LSPEDITLHN (185 aa)) are YP domain. Positions 1821 to 1859 (GSVISGNNVQLAGGNITNSGSSINAQNDLLLDRTGSIDN) are periplasmic FHA-1 repeat (pFR). Positions 1930-2526 (RATDSLFMGA…QDSDRYDSRQ (597 aa)) are FHA-2. 2 disordered regions span residues 2195–2228 (TGTG…STIG) and 2456–2497 (AGIN…SGAQ). Composition is skewed to polar residues over residues 2217–2228 (GTTQSQSASTIG) and 2483–2497 (VSLT…SGAQ). Residues 2862–2904 (DNLSEQERQQISMLATIASGIAGGLVGNSTSAAGTGAQAGRNS) form a pre-toxin (PT) domain region. Positions 2905–2908 (VENN) match the VENN CT cleavage motif motif. The segment at 2909–3121 (AMSGLEGFGT…IGTVTDYQIE (213 aa)) is C-terminal effector domain (CT).

The protein in the N-terminal section; belongs to the CdiA toxin family. As to quaternary structure, probably interacts with cognate immunity protein CdiI. In terms of processing, expressed as 303 kDa protein which can be processed to 284 kDa and 195 kDa forms.

The protein resides in the secreted. It localises to the target cell. The protein localises to the target cell cytoplasm. Functionally, toxic component of a toxin-immunity protein module, which functions as a cellular contact-dependent growth inhibition (CDI) system. CDI modules allow bacteria to communicate with and inhibit the growth of closely related neighboring bacteria (target cell counts decrease 1000- to 10(5)-fold) in a contact-dependent fashion. Inhibitory cells must be in logarithmic (not stationary) phase to inhibit growth of their targets, but protein synthesis is not necessary. The presence of P or S but not type 1 pili protects the target cells against growth inhibition for this CDI. BamA on the outer membrane of target cells acts as a receptor for CdiA, while target cell multidrug efflux pump AcrB facilitates its transport into the cytoplasm. Outer membrane receptor function is dependent on extracellular loops of BamA. Cells undergoing CDI show a 2- to 5-fold reversible decrease in aerobic respiration, proton motive force and steady-state ATP levels, suggesting this CT module is an ionophore that disrupts the target cell's inner cell membrane. Growth recovery requires an energy source. Cells expressing this protein in the absence of CdiI initially form filaments, some of which contain multiple nucleoids, while others are devoid of nucleoids. CDI cells induce the phage shock response, but pspA is not required for recovery from CDI. CDI is neutralized by its cognate immunity protein CdiI, but not by non-cognate CdiI from other bacteria with different CDI systems. Plays a role in biofilm formation, a region N-terminal to residue 644 is implicated in this receptor-independent cell adhesion. Its function is as follows. The CdiA protein is thought to be exported from the cell through the central lumen of CdiB, the other half of its two-partner system (TPS). The TPS domain probably remains associated with CdiB while the FHA-1 domain forms an extended filament (33 nm long) with the receptor-binding domain (RBD) at its extremity; in the secretion arrested state the C-terminus of the RBD and YP domains form a hairpin-like structure as the FHA-2, PT and CT domains are periplasmic. The YP domain is probably responsible for this arrest at the point where it re-enters the host cell periplasm. Upon binding to a target cell outer membrane receptor (BamA for this CDI) a signal is transmitted to activate secretion. The filament becomes about 5 nm longer, the rest of CdiA is secreted and the FHA-2 domain becomes stably associated with the target cell's outer membrane where it facilitates entry of the toxic CT domain into the target cell periplasm. From there the toxic CT domain is cleaved and gains access to the target cell cytoplasm via an inner membrane protein (multidrug efflux pump AcrB for this CDI). The polypeptide is Toxin CdiA (Escherichia coli).